The chain runs to 151 residues: Neuroglobin (151 aa).

The 149-residue stretch at 1–149 (MELPEPELIR…VVQAMSRGWG (149 aa)) folds into the Globin domain. The heme b site is built by histidine 64 and histidine 96.

This sequence belongs to the globin family. As to quaternary structure, monomer. Homodimer and homotetramer; disulfide-linked. Mainly monomeric but also detected as part of homodimers and homotetramers. Interacts with 14-3-3 proteins; regulates the phosphorylation of NGB. Could interact (ferrous form) with G-alpha(i) proteins (GTP-bound form). In terms of processing, phosphorylated during hypoxia by ERK1/ERK2. Phosphorylation regulates the heme pocket hexacoordination preventing the association of His-64 with the heme metal center. Thereby, promotes the access of dioxygen and nitrite to the heme and stimulates the nitrite reductase activity. Phosphorylation during hypoxia is stabilized by 14-3-3 proteins.

It is found in the cytoplasm. The protein resides in the cytosol. It localises to the mitochondrion matrix. The enzyme catalyses Fe(III)-heme b-[protein] + nitric oxide + H2O = Fe(II)-heme b-[protein] + nitrite + 2 H(+). Monomeric globin with a bis-histidyl six-coordinate heme-iron atom through which it can bind dioxygen, carbon monoxide and nitric oxide. Could help transport oxygen and increase its availability to the metabolically active neuronal tissues, though its low quantity in tissues as well as its high affinity for dioxygen, which may limit its oxygen-releasing ability, argue against it. The ferrous/deoxygenated form exhibits a nitrite reductase activity and it could produce nitric oxide which in turn inhibits cellular respiration in response to hypoxia. In its ferrous/deoxygenated state, it may also exhibit GDI (Guanine nucleotide Dissociation Inhibitor) activity toward heterotrimeric G-alpha proteins, thereby regulating signal transduction to facilitate neuroprotective responses in the wake of hypoxia and associated oxidative stress. The polypeptide is Neuroglobin (Bos taurus (Bovine)).